The chain runs to 389 residues: MADNRRRRSLFDFLLFSVFLGLACLCLSPIPATAQRRKLRFSVNGEFKILQVADMHFANGAKTQCQNVLPSQRAHCSDLNTTIFMSRVIAAEKPDLIVFTGDNIFGFDVKDALKSINAAFAPAIASKIPWVAILGNHDQESTFTRQQVMNHIVKLPNTLSQVNPPEAAHYIDGFGNYNLQIHGAADSKLQNKSVLNLYFLDSGDYSSVPYMEGYDWIKTSQQFWFDRTSKRLKREYNAKPNPQEGIAPGLAYFHIPLPEFLSFDSKNATKGVRQEGTSAASTNSGFFTTLIARGDVKSVFVGHDHVNDFCGELKGLNLCYGGGFGYHAYGKAGWERRARVVVVDLNKKRKGKWGAVKSIKTWKRLDDKHLSVIDSQVLWNNSANKLVVR.

A signal peptide spans 1 to 34; the sequence is MADNRRRRSLFDFLLFSVFLGLACLCLSPIPATA. N-linked (GlcNAc...) asparagine glycosylation is present at Asn-80. Asn-136 serves as a coordination point for substrate. Residue Asn-136 coordinates Zn(2+). N-linked (GlcNAc...) asparagine glycosylation is found at Asn-191 and Asn-267. Position 303 (His-303) interacts with Zn(2+). 303 to 305 serves as a coordination point for substrate; it reads HDH. His-305 is a binding site for Fe cation. Asn-380 carries an N-linked (GlcNAc...) asparagine glycan.

This sequence belongs to the metallophosphoesterase superfamily. Purple acid phosphatase family. In terms of assembly, homodimer. Requires Fe cation as cofactor. Zn(2+) is required as a cofactor. Expressed in roots, stems, leaves, flowers and siliques.

The protein localises to the secreted. The sequence is that of Probable inactive purple acid phosphatase 29 (PAP29) from Arabidopsis thaliana (Mouse-ear cress).